The primary structure comprises 684 residues: Threonine--tRNA ligase (684 aa).

One can recognise a TGS domain in the interval 1-66; the sequence is MTVPATDSWP…DTDAEVVPVA (66 aa). The segment at 261–567 is catalytic; it reads DHRKLGSELD…LTEHYAGAFP (307 aa). The Zn(2+) site is built by Cys366, His417, and His544.

Belongs to the class-II aminoacyl-tRNA synthetase family. As to quaternary structure, homodimer. Zn(2+) serves as cofactor.

It localises to the cytoplasm. The catalysed reaction is tRNA(Thr) + L-threonine + ATP = L-threonyl-tRNA(Thr) + AMP + diphosphate + H(+). Functionally, catalyzes the attachment of threonine to tRNA(Thr) in a two-step reaction: L-threonine is first activated by ATP to form Thr-AMP and then transferred to the acceptor end of tRNA(Thr). Also edits incorrectly charged L-seryl-tRNA(Thr). The protein is Threonine--tRNA ligase of Mycobacterium avium (strain 104).